The primary structure comprises 415 residues: 3-isopropylmalate dehydratase large subunit (415 aa).

[4Fe-4S] cluster-binding residues include Cys297, Cys355, and Cys358.

Belongs to the aconitase/IPM isomerase family. LeuC type 2 subfamily. Heterodimer of LeuC and LeuD. Requires [4Fe-4S] cluster as cofactor.

It catalyses the reaction (2R,3S)-3-isopropylmalate = (2S)-2-isopropylmalate. It participates in amino-acid biosynthesis; L-leucine biosynthesis; L-leucine from 3-methyl-2-oxobutanoate: step 2/4. In terms of biological role, catalyzes the isomerization between 2-isopropylmalate and 3-isopropylmalate, via the formation of 2-isopropylmaleate. In Caldivirga maquilingensis (strain ATCC 700844 / DSM 13496 / JCM 10307 / IC-167), this protein is 3-isopropylmalate dehydratase large subunit.